Here is a 727-residue protein sequence, read N- to C-terminus: C-terminal-binding protein 1 (727 aa).

The THAP-type zinc-finger motif lies at 5-60 (CGFPNCKFRSRYRGLEDNRHFYRIPKRPLILRQRWLTAIGRTEETVVSQLRICSAH). Residues 64–158 (GEKKEGDIPV…HPPVLPDPQQ (95 aa)) form a disordered region. Basic and acidic residues predominate over residues 77–94 (TVDKQIKIELPPKESKNS). Residues Y251, 331 to 336 (LGCGRV), D355, 388 to 394 (CNLGDET), 415 to 417 (TSH), D441, and 467 to 470 (HSAW) each bind NAD(+). The span at 587 to 613 (ANAQRGSPANRSSRSSPSPHTNKSSVS) shows a compositional bias: low complexity. 2 disordered regions span residues 587–629 (ANAQ…SPAA) and 652–681 (APNG…GDEN).

This sequence belongs to the D-isomer specific 2-hydroxyacid dehydrogenase family. In terms of assembly, homodimer.

Functionally, binds DNA and represses gene expression. Plays a role in regulation of life span, possibly by regulating transcription of genes important for lipid metabolism. This is C-terminal-binding protein 1 from Caenorhabditis elegans.